The sequence spans 392 residues: Lipid-A-disaccharide synthase (392 aa).

It belongs to the LpxB family.

It carries out the reaction a lipid X + a UDP-2-N,3-O-bis[(3R)-3-hydroxyacyl]-alpha-D-glucosamine = a lipid A disaccharide + UDP + H(+). It functions in the pathway bacterial outer membrane biogenesis; LPS lipid A biosynthesis. Condensation of UDP-2,3-diacylglucosamine and 2,3-diacylglucosamine-1-phosphate to form lipid A disaccharide, a precursor of lipid A, a phosphorylated glycolipid that anchors the lipopolysaccharide to the outer membrane of the cell. This is Lipid-A-disaccharide synthase from Bradyrhizobium diazoefficiens (strain JCM 10833 / BCRC 13528 / IAM 13628 / NBRC 14792 / USDA 110).